The primary structure comprises 574 residues: MGVTSLLFCGVFFLLLLFVAADTCEDIFMHNVIISEGQPFPFNCTYPPETNGAVNLTWYKTPSKSPVSNNRHLRVHQDQTWILFLPLTLEDSGIYQCVIRNAHNCYQIAVNLTVLKNHWCDSSMEGSPVNSPDVYQQILPIGKSGSLNCHLYFPESCALDSIKWYKGCEEIKAGKKYSPSGAKLLVNNVAVEDGGSYACSARLTHLGRHFTIRNYIAVNTKEVEYGRRIPNITYPKNNSIEVPLGSTLIVNCNITDTKENTNLRCWRVNNTLVDDYYKDSKRIQEGIETNVSLRDQIRYTVNITFLKVKMEDYGRPFTCHAGVSAAYIILIYPVPDFRAYLLGGLMAFLLLVVSVLFIYNSFKIDIMLWYRSAFHTAQAPDDEKLYDAYVLYPKYPRGSQGHDVDTLVLKILPEVLEKQCGYKLFIFGRDEFPGQAVASVIDENIKLCRRLMVFVAPESSSFGFLKNLSEEQIAVYNALIQHGMKVILIELEKVKDYSTMPESIQYIRQKHGAIQWDGDFTEQSQCAKTKFWKKVRYHMPPRRYPASSPVQLLGHIPCNCKAGKCNAATGLITP.

The first 21 residues, 1–21 (MGVTSLLFCGVFFLLLLFVAA), serve as a signal peptide directing secretion. Topologically, residues 22-338 (DTCEDIFMHN…ILIYPVPDFR (317 aa)) are extracellular. Ig-like C2-type domains are found at residues 25–113 (EDIF…VNLT), 132–215 (PDVY…IRNY), and 225–321 (YGRR…TCHA). Residues Asn43, Asn55, and Asn111 are each glycosylated (N-linked (GlcNAc...) asparagine). Cys44 and Cys97 are oxidised to a cystine. A disulfide bridge links Cys149 with Cys199. 6 N-linked (GlcNAc...) asparagine glycosylation sites follow: Asn231, Asn237, Asn253, Asn269, Asn290, and Asn302. Cys252 and Cys319 are oxidised to a cystine. A helical membrane pass occupies residues 339–359 (AYLLGGLMAFLLLVVSVLFIY). The Cytoplasmic portion of the chain corresponds to 360-574 (NSFKIDIMLW…CNAATGLITP (215 aa)). A TIR domain is found at 384-539 (KLYDAYVLYP…KFWKKVRYHM (156 aa)). Glu470 is an active-site residue.

Belongs to the interleukin-1 receptor family. In terms of assembly, interacts with IL1RAP; the association is enhanced by IL36B indicative for an functional signaling complex and inhibited by IL36RN. In terms of tissue distribution, expressed in bone marrow-derived dendritic cells, splenic CD4(+) T-cells, bone marrow-derived macrophages and bone marrow-derived neutrophils.

The protein resides in the membrane. It carries out the reaction NAD(+) + H2O = ADP-D-ribose + nicotinamide + H(+). Receptor for interleukin-36 (IL36A, IL36B and IL36G). After binding to interleukin-36 associates with the coreceptor IL1RAP to form the interleukin-36 receptor complex which mediates interleukin-36-dependent activation of NF-kappa-B, MAPK and other pathways. The IL-36 signaling system is thought to be present in epithelial barriers and to take part in local inflammatory response; it is similar to the IL-1 system. Seems to be involved in skin inflammatory response by induction of the IL-23/IL-17/IL-22 pathway. The chain is Interleukin-1 receptor-like 2 (Il1rl2) from Mus musculus (Mouse).